Consider the following 44-residue polypeptide: Alpha-amylase inhibitor magnificamide (44 aa).

Disulfide bonds link cysteine 6–cysteine 38, cysteine 16–cysteine 33, and cysteine 20–cysteine 39. The tract at residues 7–10 (YIYH) is inhibitory motif.

The protein belongs to the sea anemone alpha-amylase inhibitor family.

It localises to the secreted. Functionally, mammalian alpha-amylase (AMY2A) inhibitor. The recombinant peptide inhibits porcine pancreatic (Ki=0.17 nM) and human saliva alpha-amylases (Ki=7.7 nM). It does not show antimicrobial (tested on fungi and bacteria) or channel modulating activities (tested on 18 voltage-gated sodium and potassium channles). This is Alpha-amylase inhibitor magnificamide from Heteractis magnifica (Magnificent sea anemone).